Here is a 1161-residue protein sequence, read N- to C-terminus: Hamartin (1161 aa).

Lysine 30 is covalently cross-linked (Glycyl lysine isopeptide (Lys-Gly) (interchain with G-Cter in ubiquitin)). Disordered stretches follow at residues 296 to 336 and 353 to 591; these read PYVD…PSTR and CGMT…QRGV. Residues 303–336 are compositionally biased toward low complexity; it reads SYGGSTSTPSSSSRLMLFSPPGQLPQSLSSPSTR. Over residues 393–402 the composition is skewed to pro residues; sequence TSPPPAPPCP. A mediates interaction with WDR45B region spans residues 403–784; the sequence is QDDCVHGSAA…QIRQLQHDRE (382 aa). Residues 471 to 484 show a composition bias toward basic and acidic residues; the sequence is EKDKEEAAISKELS. Residues serine 484, serine 502, serine 508, serine 518, serine 592, and serine 595 each carry the phosphoserine modification. Polar residues predominate over residues 509-529; sequence LSGSQRKTHSAASGTQGSSVN. Coiled coils occupy residues 721–849, 879–917, and 967–991; these read IRAA…NRQL, TAYRKELEKNRSHLLQQNQRLDASQRRVLELESLLAKKD, and EKDGRLRKLEEDRAEAAEAAEERLD. Disordered stretches follow at residues 1003–1077 and 1092–1161; these read GHNE…SLPS and NKSE…PEHS. Over residues 1004–1017 the composition is skewed to basic and acidic residues; sequence HNEEASGHNGETRT. A compositionally biased stretch (low complexity) spans 1026–1043; it reads SCGGRVTGGSSSSSSELS. The span at 1064 to 1077 shows a compositional bias: polar residues; sequence PSSSIPTTVGSLPS. Serine 1094 is subject to Phosphoserine. A compositionally biased stretch (low complexity) spans 1103-1113; it reads VTMSSSSLSET. Composition is skewed to basic and acidic residues over residues 1114-1124 and 1152-1161; these read LKTELGKDSGT and DYNETHPEHS.

Component of the TSC-TBC complex (also named Rhebulator complex), composed of 2 molecules of TSC1, 2 molecules of TSC2 and 1 molecule of TBC1D7. Probably forms a complex composed of chaperones HSP90 and HSP70, co-chaperones STIP1/HOP, CDC37, PPP5C, PTGES3/p23, TSC1 and client protein TSC2. Forms a complex composed of chaperones HSP90 and HSP70, co-chaperones CDC37, PPP5C, TSC1 and client protein TSC2, CDK4, AKT, RAF1 and NR3C1; this complex does not contain co-chaperones STIP1/HOP and PTGES3/p23. Forms a complex containing HSP90AA1, TSC1 and TSC2; TSC1 is required to recruit TCS2 to the complex. Interacts (via C-terminus) with the closed form of HSP90AA1 (via the middle domain and TPR repeat-binding motif). Interacts with DOCK7. Interacts with FBXW5. Interacts with WDR45B. Interacts with RPAP3 and URI1. Post-translationally, phosphorylation at Ser-502 does not affect interaction with TSC2. In terms of processing, 'Lys-63'-linked ubiquitinated at Lys-30 by PELI1; the ubiquitination promotes TSC1/TSC2 complex stability.

Its subcellular location is the lysosome membrane. The protein resides in the cytoplasm. It localises to the cytosol. Functionally, non-catalytic component of the TSC-TBC complex, a multiprotein complex that acts as a negative regulator of the canonical mTORC1 complex, an evolutionarily conserved central nutrient sensor that stimulates anabolic reactions and macromolecule biosynthesis to promote cellular biomass generation and growth. The TSC-TBC complex acts as a GTPase-activating protein (GAP) for the small GTPase RHEB, a direct activator of the protein kinase activity of mTORC1. In absence of nutrients, the TSC-TBC complex inhibits mTORC1, thereby preventing phosphorylation of ribosomal protein S6 kinase (RPS6KB1 and RPS6KB2) and EIF4EBP1 (4E-BP1) by the mTORC1 signaling. The TSC-TBC complex is inactivated in response to nutrients, relieving inhibition of mTORC1. Within the TSC-TBC complex, TSC1 stabilizes TSC2 and prevents TSC2 self-aggregation. Involved in microtubule-mediated protein transport via its ability to regulate mTORC1 signaling. Also acts as a co-chaperone for HSP90AA1 facilitating HSP90AA1 chaperoning of protein clients such as kinases, TSC2 and glucocorticoid receptor NR3C1. Increases ATP binding to HSP90AA1 and inhibits HSP90AA1 ATPase activity. Competes with the activating co-chaperone AHSA1 for binding to HSP90AA1, thereby providing a reciprocal regulatory mechanism for chaperoning of client proteins. Recruits TSC2 to HSP90AA1 and stabilizes TSC2 by preventing the interaction between TSC2 and ubiquitin ligase HERC1. The protein is Hamartin of Mus musculus (Mouse).